The following is a 299-amino-acid chain: Recombination-associated protein RdgC (299 aa).

Belongs to the RdgC family.

The protein resides in the cytoplasm. Its subcellular location is the nucleoid. Functionally, may be involved in recombination. The polypeptide is Recombination-associated protein RdgC (Laribacter hongkongensis (strain HLHK9)).